The primary structure comprises 360 residues: Melanoma-associated antigen B16 (360 aa).

A disordered region spans residues 1-118; it reads MSQKNPEYAA…GNSVIPPDQP (118 aa). Residues 9 to 19 show a composition bias toward basic and acidic residues; it reads AADHDHTREEM. Over residues 63–98 the composition is skewed to polar residues; sequence CSSSQLLTASNQEDPAYETPSTSRGLQHPYVSSSES. In terms of domain architecture, MAGE spans 125–324; that stretch reads IDGKVNFLVN…TVFPSQYEEA (200 aa). A disordered region spans residues 340 to 360; sequence AGPSSASGESSSDMGSNVPHI. Positions 341–360 are enriched in low complexity; the sequence is GPSSASGESSSDMGSNVPHI.

The sequence is that of Melanoma-associated antigen B16 (Mageb16) from Rattus norvegicus (Rat).